We begin with the raw amino-acid sequence, 428 residues long: Cell division protein FtsZ (428 aa).

GTP-binding positions include 73 to 77, 160 to 162, glutamate 191, arginine 195, and aspartate 239; these read GGGGN and GTG. Residues 378–428 are disordered; it reads NAANARVVSAPPKRTPTQTPLTNSPAPTPEPKEKSGLDIPDFLQRRRPPKN. The segment covering 392-402 has biased composition (polar residues); the sequence is TPTQTPLTNSP.

Belongs to the FtsZ family. As to quaternary structure, homodimer. Polymerizes to form a dynamic ring structure in a strictly GTP-dependent manner. Interacts directly with several other division proteins.

Its subcellular location is the cytoplasm. Essential cell division protein that forms a contractile ring structure (Z ring) at the future cell division site. The regulation of the ring assembly controls the timing and the location of cell division. One of the functions of the FtsZ ring is to recruit other cell division proteins to the septum to produce a new cell wall between the dividing cells. Binds GTP and shows GTPase activity. In Nostoc sp. (strain PCC 7120 / SAG 25.82 / UTEX 2576), this protein is Cell division protein FtsZ.